We begin with the raw amino-acid sequence, 159 residues long: SsrA-binding protein (159 aa).

The segment at 134–159 is disordered; the sequence is KLHDKRETSKERDWNRQKNRLLKERG. Residues 137-159 are compositionally biased toward basic and acidic residues; sequence DKRETSKERDWNRQKNRLLKERG.

This sequence belongs to the SmpB family.

Its subcellular location is the cytoplasm. Its function is as follows. Required for rescue of stalled ribosomes mediated by trans-translation. Binds to transfer-messenger RNA (tmRNA), required for stable association of tmRNA with ribosomes. tmRNA and SmpB together mimic tRNA shape, replacing the anticodon stem-loop with SmpB. tmRNA is encoded by the ssrA gene; the 2 termini fold to resemble tRNA(Ala) and it encodes a 'tag peptide', a short internal open reading frame. During trans-translation Ala-aminoacylated tmRNA acts like a tRNA, entering the A-site of stalled ribosomes, displacing the stalled mRNA. The ribosome then switches to translate the ORF on the tmRNA; the nascent peptide is terminated with the 'tag peptide' encoded by the tmRNA and targeted for degradation. The ribosome is freed to recommence translation, which seems to be the essential function of trans-translation. This is SsrA-binding protein from Sinorhizobium fredii (strain NBRC 101917 / NGR234).